The chain runs to 157 residues: Ribosomal RNA large subunit methyltransferase H (157 aa).

Residues Leu73, Gly105, and Leu124–Phe129 contribute to the S-adenosyl-L-methionine site.

The protein belongs to the RNA methyltransferase RlmH family. As to quaternary structure, homodimer.

It localises to the cytoplasm. The enzyme catalyses pseudouridine(1915) in 23S rRNA + S-adenosyl-L-methionine = N(3)-methylpseudouridine(1915) in 23S rRNA + S-adenosyl-L-homocysteine + H(+). Its function is as follows. Specifically methylates the pseudouridine at position 1915 (m3Psi1915) in 23S rRNA. The protein is Ribosomal RNA large subunit methyltransferase H of Porphyromonas gingivalis (strain ATCC 33277 / DSM 20709 / CIP 103683 / JCM 12257 / NCTC 11834 / 2561).